The following is a 138-amino-acid chain: Dual specificity phosphatase ibp1 (138 aa).

In terms of domain architecture, Rhodanese spans 19-133 (SPNEISIIDV…WKRRYGGQQG (115 aa)). The Phosphocysteine intermediate role is filled by Cys-70.

It belongs to the MPI phosphatase family.

Its subcellular location is the cytoplasm. The protein resides in the nucleus. The enzyme catalyses O-phospho-L-tyrosyl-[protein] + H2O = L-tyrosyl-[protein] + phosphate. May play a role in DNA replication checkpoint via regulation of hsk1 or may act downstream of hsk1 in an S phase regulatory pathway. The protein is Dual specificity phosphatase ibp1 (ibp1) of Schizosaccharomyces pombe (strain 972 / ATCC 24843) (Fission yeast).